The primary structure comprises 88 residues: Otospiralin (88 aa).

The first 21 residues, 1-21 (MQACMVPGLALCLLLGSLTEA), serve as a signal peptide directing secretion.

Belongs to the otospiralin family. As to expression, ear specific.

It is found in the secreted. Its function is as follows. May be essential for the survival of the neurosensory epithelium of the inner ear. The polypeptide is Otospiralin (OTOS) (Cavia porcellus (Guinea pig)).